A 492-amino-acid polypeptide reads, in one-letter code: Glutamyl-tRNA(Gln) amidotransferase subunit A (492 aa).

Residues K78 and S158 each act as charge relay system in the active site. S182 functions as the Acyl-ester intermediate in the catalytic mechanism.

Belongs to the amidase family. GatA subfamily. In terms of assembly, heterotrimer of A, B and C subunits.

The catalysed reaction is L-glutamyl-tRNA(Gln) + L-glutamine + ATP + H2O = L-glutaminyl-tRNA(Gln) + L-glutamate + ADP + phosphate + H(+). Its function is as follows. Allows the formation of correctly charged Gln-tRNA(Gln) through the transamidation of misacylated Glu-tRNA(Gln) in organisms which lack glutaminyl-tRNA synthetase. The reaction takes place in the presence of glutamine and ATP through an activated gamma-phospho-Glu-tRNA(Gln). The protein is Glutamyl-tRNA(Gln) amidotransferase subunit A of Parvibaculum lavamentivorans (strain DS-1 / DSM 13023 / NCIMB 13966).